The chain runs to 893 residues: Phosphatidate phosphatase LPIN2 (893 aa).

Residues 1 to 108 form an N-LIP region; the sequence is MNYVGQLAGQ…LPAYLATSPI (108 aa). S106 bears the Phosphoserine mark. The tract at residues 122–216 is disordered; that stretch reads LVKSSGNERP…EDYKEPSLFH (95 aa). Residues 123–151 show a composition bias toward polar residues; sequence VKSSGNERPAQSSDVSHTLESEAVFTQSS. Basic residues predominate over residues 152 to 162; the sequence is VKKKKRRRKKC. Residues 153-158 carry the Nuclear localization signal motif; that stretch reads KKKKRR. 3 positions are modified to phosphoserine: S174, S186, and S187. Residues 204–213 are compositionally biased toward basic and acidic residues; that stretch reads LKEEDYKEPS. A phosphoserine mark is found at S243 and S303. 2 disordered regions span residues 357 to 400 and 417 to 456; these read LLDA…PDDI and FPKS…TECL. Positions 360-371 are enriched in low complexity; the sequence is ADPVPSPSAEAP. A compositionally biased stretch (basic residues) spans 384-393; that stretch reads KKKGVHKRSQ. The span at 423-445 shows a compositional bias: polar residues; the sequence is DPGSRQWPESDTFSGSQSPQSVG. A Phosphoserine modification is found at S563. A disordered region spans residues 568 to 611; sequence LPETKEGKSEVPPANDLPSNAEEPTSARPAENDTSSDEGSQELE. Residues 601–611 are compositionally biased toward acidic residues; it reads TSSDEGSQELE. The segment at 632–834 is C-LIP; it reads YKKSLRLSSD…RIFTVNPKGE (203 aa). The short motif at 686–690 is the DXDXT motif element; that stretch reads DIDGT. Positions 697-701 match the LXXIL motif motif; the sequence is LGQIL.

This sequence belongs to the lipin family. It depends on Mg(2+) as a cofactor. In terms of tissue distribution, expressed at high level in liver and to some extend in lung, kidney, placenta, spleen, thymus, lymph node, prostate, testes, small intestine, and colon. Expressed also in circulating red blood cells and site of lymphopoiesis.

It localises to the nucleus. Its subcellular location is the cytoplasm. The protein resides in the cytosol. It is found in the endoplasmic reticulum membrane. It carries out the reaction a 1,2-diacyl-sn-glycero-3-phosphate + H2O = a 1,2-diacyl-sn-glycerol + phosphate. With respect to regulation, inhibited by N-ethylmaleimide. Its function is as follows. Acts as a magnesium-dependent phosphatidate phosphatase enzyme which catalyzes the conversion of phosphatidic acid to diacylglycerol during triglyceride, phosphatidylcholine and phosphatidylethanolamine biosynthesis in the endoplasmic reticulum membrane. Plays important roles in controlling the metabolism of fatty acids at different levels. Also acts as a nuclear transcriptional coactivator for PPARGC1A to modulate lipid metabolism. In Mus musculus (Mouse), this protein is Phosphatidate phosphatase LPIN2.